The chain runs to 200 residues: Probable molybdenum cofactor guanylyltransferase (200 aa).

Residues 9–11 (LAG), Lys-21, Asp-69, and Asp-100 each bind GTP. Asp-100 serves as a coordination point for Mg(2+).

The protein belongs to the MobA family. Requires Mg(2+) as cofactor.

Its subcellular location is the cytoplasm. The catalysed reaction is Mo-molybdopterin + GTP + H(+) = Mo-molybdopterin guanine dinucleotide + diphosphate. Transfers a GMP moiety from GTP to Mo-molybdopterin (Mo-MPT) cofactor (Moco or molybdenum cofactor) to form Mo-molybdopterin guanine dinucleotide (Mo-MGD) cofactor. This Bacillus cereus (strain B4264) protein is Probable molybdenum cofactor guanylyltransferase.